Consider the following 470-residue polypeptide: Neuraminidase (470 aa).

The Intravirion segment spans residues 1 to 6 (MNPNQK). A helical transmembrane segment spans residues 7–27 (IITIGSICMAIGIISLILQIG). The involved in apical transport and lipid raft association stretch occupies residues 11-33 (GSICMAIGIISLILQIGNIISIW). Residues 28-470 (NIISIWVSHS…GAELPFTIDK (443 aa)) lie on the Virion surface side of the membrane. Residues 36–90 (HSIQTGSQNHTGICNQRIITYENSTWVNQTYVNISNTNVVAGKDTTSMTLAGNSS) are hypervariable stalk region. N-linked (GlcNAc...) asparagine; by host glycans are attached at residues Asn44, Asn58, Asn63, Asn68, and Asn88. Positions 91 to 470 (LCPIRGWAIY…GAELPFTIDK (380 aa)) are head of neuraminidase. 8 disulfides stabilise this stretch: Cys92/Cys417, Cys124/Cys129, Cys184/Cys231, Cys233/Cys238, Cys279/Cys292, Cys281/Cys290, Cys318/Cys335, and Cys421/Cys447. Substrate is bound at residue Arg118. Asn146 carries N-linked (GlcNAc...) asparagine; by host glycosylation. Catalysis depends on Asp151, which acts as the Proton donor/acceptor. Arg152 is a substrate binding site. An N-linked (GlcNAc...) asparagine; by host glycan is attached at Asn235. 277–278 (EE) contacts substrate. An N-linked (GlcNAc...) asparagine; by host glycan is attached at Asn285. Arg293 contributes to the substrate binding site. Residues Asp294, Gly298, and Asp324 each coordinate Ca(2+). Residue Asn365 is glycosylated (N-linked (GlcNAc...) asparagine; by host). Arg368 is a substrate binding site. The active-site Nucleophile is Tyr402. Asn455 carries N-linked (GlcNAc...) asparagine; by host glycosylation.

It belongs to the glycosyl hydrolase 34 family. Homotetramer. Ca(2+) is required as a cofactor. In terms of processing, N-glycosylated.

It localises to the virion membrane. The protein resides in the host apical cell membrane. The catalysed reaction is Hydrolysis of alpha-(2-&gt;3)-, alpha-(2-&gt;6)-, alpha-(2-&gt;8)- glycosidic linkages of terminal sialic acid residues in oligosaccharides, glycoproteins, glycolipids, colominic acid and synthetic substrates.. With respect to regulation, inhibited by the neuraminidase inhibitors zanamivir (Relenza) and oseltamivir (Tamiflu). These drugs interfere with the release of progeny virus from infected cells and are effective against all influenza strains. Resistance to neuraminidase inhibitors is quite rare. In terms of biological role, catalyzes the removal of terminal sialic acid residues from viral and cellular glycoconjugates. Cleaves off the terminal sialic acids on the glycosylated HA during virus budding to facilitate virus release. Additionally helps virus spread through the circulation by further removing sialic acids from the cell surface. These cleavages prevent self-aggregation and ensure the efficient spread of the progeny virus from cell to cell. Otherwise, infection would be limited to one round of replication. Described as a receptor-destroying enzyme because it cleaves a terminal sialic acid from the cellular receptors. May facilitate viral invasion of the upper airways by cleaving the sialic acid moieties on the mucin of the airway epithelial cells. Likely to plays a role in the budding process through its association with lipid rafts during intracellular transport. May additionally display a raft-association independent effect on budding. Plays a role in the determination of host range restriction on replication and virulence. Sialidase activity in late endosome/lysosome traffic seems to enhance virus replication. In Influenza A virus (strain A/Kiev/59/1979 H1N1), this protein is Neuraminidase.